The chain runs to 466 residues: Chromosomal replication initiator protein DnaA (466 aa).

Residues 1–86 form a domain I, interacts with DnaA modulators region; that stretch reads MSLSLWQQCL…EVGTKPVTQT (86 aa). Positions 86-129 are domain II; the sequence is TLKTPVHNVVAPTQTTTAQPQRVAPAARSGWDNVPAPAEPTYRS. The tract at residues 130–346 is domain III, AAA+ region; that stretch reads NVNVKHTFDN…GALNRVIANA (217 aa). Residues glycine 174, glycine 176, lysine 177, and threonine 178 each contribute to the ATP site. A domain IV, binds dsDNA region spans residues 347 to 466; it reads NFTGRAITID…FSNLIRTLSS (120 aa).

Belongs to the DnaA family. In terms of assembly, oligomerizes as a right-handed, spiral filament on DNA at oriC.

It localises to the cytoplasm. Functionally, plays an essential role in the initiation and regulation of chromosomal replication. ATP-DnaA binds to the origin of replication (oriC) to initiate formation of the DNA replication initiation complex once per cell cycle. Binds the DnaA box (a 9 base pair repeat at the origin) and separates the double-stranded (ds)DNA. Forms a right-handed helical filament on oriC DNA; dsDNA binds to the exterior of the filament while single-stranded (ss)DNA is stabiized in the filament's interior. The ATP-DnaA-oriC complex binds and stabilizes one strand of the AT-rich DNA unwinding element (DUE), permitting loading of DNA polymerase. After initiation quickly degrades to an ADP-DnaA complex that is not apt for DNA replication. Binds acidic phospholipids. The protein is Chromosomal replication initiator protein DnaA of Salmonella choleraesuis (strain SC-B67).